Here is a 447-residue protein sequence, read N- to C-terminus: Cysteine--tRNA ligase (447 aa).

Residue Cys-28 coordinates Zn(2+). A 'HIGH' region motif is present at residues 30–40; that stretch reads PTVYNYIHIGN. Positions 211, 236, and 240 each coordinate Zn(2+). The 'KMSKS' region signature appears at 268-272; that stretch reads KMSKS. Residue Lys-271 participates in ATP binding.

This sequence belongs to the class-I aminoacyl-tRNA synthetase family. Monomer. Zn(2+) is required as a cofactor.

Its subcellular location is the cytoplasm. The enzyme catalyses tRNA(Cys) + L-cysteine + ATP = L-cysteinyl-tRNA(Cys) + AMP + diphosphate. This is Cysteine--tRNA ligase from Streptococcus pyogenes serotype M1.